A 357-amino-acid chain; its full sequence is Cyclin-Y (357 aa).

Over residues 1 to 13 (MGNSSCCLRTRSS) the composition is skewed to polar residues. A disordered region spans residues 1 to 23 (MGNSSCCLRTRSSSGEDKSYNND). The 99-residue stretch at 186-284 (PDHRNIYRFV…RFLECLDFNI (99 aa)) folds into the Cyclin N-terminal domain.

Belongs to the cyclin family. As to quaternary structure, interacts with pct-1; the interaction is required to activate pct-1.

It is found in the cytoplasm. Its subcellular location is the cell projection. The protein localises to the dendrite. It localises to the axon. In association with pct-1, regulates the trafficking of synaptic vesicle precursors in DA motor neurons by promoting anterograde trafficking to the axon and preventing dynein-dependent trafficking to the dendrite. May also regulate synaptic vesicle trafficking in DD motor neurons and in RIA interneurons. Involved in synapse formation during DD motor neuron remodeling by disassembling ventral presynaptic structures. May activate cdk-5. The polypeptide is Cyclin-Y (Caenorhabditis elegans).